The chain runs to 322 residues: Mas-related G-protein coupled receptor member X1 (322 aa).

At 1 to 31 (MDPTISTLDTELTPINGTEETLCYKQTLSLT) the chain is on the extracellular side. A glycan (N-linked (GlcNAc...) asparagine) is linked at Asn16. Residues 32–52 (VLTCIVSLVGLTGNAVVLWLL) traverse the membrane as a helical segment. At 53-67 (GCRMRRNAFSIYILN) the chain is on the cytoplasmic side. A helical membrane pass occupies residues 68-88 (LAAADFLFLSGRLIYSLLSFI). Residues 89–96 (SIPHTISK) lie on the Extracellular side of the membrane. The helical transmembrane segment at 97–117 (ILYPVMMFSYFAGLSFLSAVS) threads the bilayer. The Cytoplasmic segment spans residues 118 to 144 (TERCLSVLWPIWYRCHRPTHLSAVVCV). A helical transmembrane segment spans residues 145-165 (LLWALSLLRSILEWMLCGFLF). Residues 166-177 (SGADSAWCQTSD) lie on the Extracellular side of the membrane. The helical transmembrane segment at 178–198 (FITVAWLIFLCVVLCGSSLVL) threads the bilayer. The Cytoplasmic segment spans residues 199 to 221 (LIRILCGSRKIPLTRLYVTILLT). Residues 222–242 (VLVFLLCGLPFGIQFFLFLWI) form a helical membrane-spanning segment. The Extracellular portion of the chain corresponds to 243–254 (HVDREVLFCHVH). The chain crosses the membrane as a helical span at residues 255 to 275 (LVSIFLSALNSSANPIIYFFV). The Cytoplasmic portion of the chain corresponds to 276-322 (GSFRQRQNRQNLKLVLQRALQDASEVDEGGGQLPEEILELSGSRLEQ).

This sequence belongs to the G-protein coupled receptor 1 family. Mas subfamily. Uniquely localized in a subset of small dorsal root and trigeminal sensory neurons.

The protein resides in the cell membrane. Functionally, orphan receptor. Probably involved in the function of nociceptive neurons. May regulate nociceptor function and/or development, including the sensation or modulation of pain. Potently activated by enkephalins including BAM22 (bovine adrenal medulla peptide 22) and BAM (8-22). BAM22 is the most potent compound and evoked a large and dose-dependent release of intracellular calcium in stably transfected cells. G(alpha)q proteins are involved in the calcium-signaling pathway. Activated by the antimalarial drug, chloroquine. May mediate chloroquine-induced itch, in a histamine-independent manner. The protein is Mas-related G-protein coupled receptor member X1 (MRGPRX1) of Homo sapiens (Human).